A 131-amino-acid polypeptide reads, in one-letter code: Small ribosomal subunit protein uS8 (131 aa).

It belongs to the universal ribosomal protein uS8 family. As to quaternary structure, part of the 30S ribosomal subunit. Contacts proteins S5 and S12.

One of the primary rRNA binding proteins, it binds directly to 16S rRNA central domain where it helps coordinate assembly of the platform of the 30S subunit. The polypeptide is Small ribosomal subunit protein uS8 (Chlorobium phaeovibrioides (strain DSM 265 / 1930) (Prosthecochloris vibrioformis (strain DSM 265))).